Here is a 486-residue protein sequence, read N- to C-terminus: Na(+)/H(+) antiporter NhaA 2 (486 aa).

11 helical membrane passes run 58 to 78, 102 to 122, 138 to 158, 168 to 188, 198 to 218, 220 to 240, 260 to 280, 300 to 320, 338 to 358, 374 to 394, and 404 to 424; these read GGLLLLAATVAALVWANTAPG, LTDWVADALLAVFFFTVGLEL, ALPVAAAAGGMLAPALLCLAL, AWAIPVATDIAFALGVLSLAG, VLLGLAVADDLGGILLIALGL, HGINPAWLATATTLLATTALA, ISLHAAGIHPTVAGVALGLLV, LGPINAAVILPAFALSATGVS, VAVGLLAGKLLGVPAGAWLAV, LVPLGLLAGIGYTVSLLITRL, and GASTAILTASVAASALALTAL. The tract at residues 432–486 is disordered; sequence GAPATRGSSRPATQVGGVAGPIPQTRRESDGGPTGGQEPPPARVRRAPPASPHPR.

Belongs to the NhaA Na(+)/H(+) (TC 2.A.33) antiporter family.

The protein resides in the cell membrane. It carries out the reaction Na(+)(in) + 2 H(+)(out) = Na(+)(out) + 2 H(+)(in). Functionally, na(+)/H(+) antiporter that extrudes sodium in exchange for external protons. The chain is Na(+)/H(+) antiporter NhaA 2 from Frankia alni (strain DSM 45986 / CECT 9034 / ACN14a).